The following is a 388-amino-acid chain: Probable proton-coupled zinc antiporter SLC30A3 (388 aa).

The interval 1-42 is disordered; that stretch reads MEPSPASGGSETTRLVSPRDRSSAGGGLRLKSLFTEPSEPLP. Residues 1–75 are Cytoplasmic-facing; sequence MEPSPASGGS…SPERAQARRQ (75 aa). Serine 63 and serine 66 each carry phosphoserine. The helical transmembrane segment at 76-96 threads the bilayer; it reads LYAACVVCFIFMAGEVVGGYL. Over 97-105 the chain is Lumenal; that stretch reads AHSLAIMTD. The chain crosses the membrane as a helical span at residues 106-126; that stretch reads AAHLLADIGSMMASLFSLWLS. Zn(2+)-binding residues include histidine 108 and aspartate 112. Topologically, residues 127 to 145 are cytoplasmic; sequence TRPATRTMTFGWHRSETLG. A helical membrane pass occupies residues 146–166; the sequence is ALASVVSLWIVTGILLYLAFL. Over 167 to 177 the chain is Lumenal; the sequence is RLLHSDYHIEA. A helical transmembrane segment spans residues 178 to 198; that stretch reads GAMLLTASIAVCANMIMAFVL. The Cytoplasmic portion of the chain corresponds to 199-235; that stretch reads HQTGAPHSHGPRGAEYAPLEEGHGHPLSLGNTSVRAA. Residues 236–256 form a helical membrane-spanning segment; it reads FVHVLGDLLQSLGVLAASILI. The Zn(2+) site is built by histidine 238 and aspartate 242. The Lumenal portion of the chain corresponds to 257 to 263; sequence YFKPQYK. The chain crosses the membrane as a helical span at residues 264 to 284; it reads VADPISTFLFSICALGSTAPT. Over 285 to 388 the chain is Cytoplasmic; the sequence is LRDVLLVLME…CLRCREPPKA (104 aa).

This sequence belongs to the cation diffusion facilitator (CDF) transporter (TC 2.A.4) family. SLC30A subfamily. In terms of assembly, homodimer. Homodimerization could regulate efficiency of zinc transport. Interacts with TMEM163.

The protein localises to the cytoplasmic vesicle. The protein resides in the secretory vesicle. It localises to the synaptic vesicle membrane. It is found in the synapse. Its subcellular location is the synaptosome. The protein localises to the late endosome membrane. The protein resides in the lysosome membrane. It catalyses the reaction Zn(2+)(in) + 2 H(+)(out) = Zn(2+)(out) + 2 H(+)(in). Its function is as follows. Probable proton-coupled zinc ion antiporter mediating the import of zinc from cytoplasm into synaptic vesicles and participating to cellular zinc ion homeostasis in the brain. In Rattus norvegicus (Rat), this protein is Probable proton-coupled zinc antiporter SLC30A3.